The sequence spans 261 residues: Carnitinyl-CoA dehydratase (261 aa).

Catalysis depends on E111, which acts as the Nucleophile. Residue E131 is the Proton acceptor of the active site.

The protein belongs to the enoyl-CoA hydratase/isomerase family.

It carries out the reaction (R)-carnitinyl-CoA = crotonobetainyl-CoA + H2O. The protein operates within amine and polyamine metabolism; carnitine metabolism. In terms of biological role, catalyzes the reversible dehydration of L-carnitinyl-CoA to crotonobetainyl-CoA. The sequence is that of Carnitinyl-CoA dehydratase from Salmonella enteritidis PT4 (strain P125109).